We begin with the raw amino-acid sequence, 307 residues long: NmrA-like family domain-containing oxidoreductase flvB (307 aa).

Residues 4 to 9 (LITGAT), 32 to 36 (SSSSP), 53 to 54 (DY), 74 to 76 (STN), and 148 to 151 (YVEG) each bind NADP(+).

Belongs to the NmrA-type oxidoreductase family.

It catalyses the reaction (2S)-5,5-dimethyl-2,3,4,5-tetrahydropyridine-2,6-dicarboxylate + NADPH + 2 H(+) = (6S)-3,3-dimethylpiperidine-2,6-dicarboxylate + NADP(+). It carries out the reaction (2S)-5,5-dimethyl-2,3,4,5-tetrahydropyridine-2,6-dicarboxylate + NADH + 2 H(+) = (6S)-3,3-dimethylpiperidine-2,6-dicarboxylate + NAD(+). The protein operates within secondary metabolite biosynthesis; terpenoid biosynthesis. In terms of biological role, nmrA-like family domain-containing oxidoreductase; part of the gene cluster that mediates the biosynthesis of flavunoidine, an alkaloidal terpenoid with a tetracyclic cage-like core connected to dimethylcadaverine via a C-N bond and acylated with 5,5-dimethyl-L-pipecolate. The tetracyclic core is synthesized by the terpene cyclase flvE and the cytochrome P450 monooxygenase flvD. The terpene cyclase flvE catalyzes the cyclization of farnesyl pyrophosphate (FPP) to form (1R,4R,5S)-(+)-acoradiene and the cytochrome P450 monooxygenase flvD is then responsible for oxidative conversion of (1R,4R,5S)-(+)-acoradiene into the tetracyclic cage present in the final product flavunoidine. In parallel, the N-methyltransferase flvH dimethylates L-lysine to give N,N-dimethyl-L-Lysin which is decarboxylated by flvG to afford dimethylcadaverine. The terpene cyclase-like protein flvF is the enzyme that attaches the dimethylcadaverine precusor at the C-7 of the tetracyclic cage to yield pre-flavunoidine. The cytochrome monooxygenase flvC hydroxylates the C-10 position of pre-flavunoidine whereas the NRPS flvI acylates the terpenoid core at the hydroxylated C-10 with dimethylpipecolate to yield final flavunoidine. The bifunctional enzyme flvA and the dehydrogenase flvB are responsible for the synthesis of the dimethylpipecolate precursor. The PLP-dependent lyase domain of flvA might use L-O-acetyl-homoserine and alpha-keto-isovalerate to form an intermediary ketone that can cyclize intramolecularly to yield an imine. The imine can be reduced by flvB to yield the 6-carboxylated pipecolate. The C-terminal alpha-KG-dependent oxygenase domain of flvA is then proposed to catalyze the decarboxylation to yield dimethylpipecolate. The sequence is that of NmrA-like family domain-containing oxidoreductase flvB from Aspergillus flavus (strain ATCC 200026 / FGSC A1120 / IAM 13836 / NRRL 3357 / JCM 12722 / SRRC 167).